A 294-amino-acid chain; its full sequence is Negative regulator of the PHO system (294 aa).

The Protein kinase domain occupies phenylalanine 7–phenylalanine 289. Residues leucine 13–valine 21 and lysine 36 contribute to the ATP site. Aspartate 130 functions as the Proton acceptor in the catalytic mechanism.

Belongs to the protein kinase superfamily. CMGC Ser/Thr protein kinase family. CDC2/CDKX subfamily. In terms of assembly, interacts with a number of cyclins.

It carries out the reaction L-seryl-[protein] + ATP = O-phospho-L-seryl-[protein] + ADP + H(+). The catalysed reaction is L-threonyl-[protein] + ATP = O-phospho-L-threonyl-[protein] + ADP + H(+). In terms of biological role, when phosphate concentrations are high it phosphorylates the PHO4 transcription factor thus establishing repression. In Yarrowia lipolytica (strain CLIB 122 / E 150) (Yeast), this protein is Negative regulator of the PHO system (PHO85).